Consider the following 196-residue polypeptide: Holliday junction branch migration complex subunit RuvA (196 aa).

The interval Met1–His63 is domain I. The domain II stretch occupies residues Thr64–Thr142. Residues Ala143–Thr146 form a flexible linker region. Residues Ala147–Lys196 form a domain III region.

It belongs to the RuvA family. As to quaternary structure, homotetramer. Forms an RuvA(8)-RuvB(12)-Holliday junction (HJ) complex. HJ DNA is sandwiched between 2 RuvA tetramers; dsDNA enters through RuvA and exits via RuvB. An RuvB hexamer assembles on each DNA strand where it exits the tetramer. Each RuvB hexamer is contacted by two RuvA subunits (via domain III) on 2 adjacent RuvB subunits; this complex drives branch migration. In the full resolvosome a probable DNA-RuvA(4)-RuvB(12)-RuvC(2) complex forms which resolves the HJ.

It localises to the cytoplasm. Functionally, the RuvA-RuvB-RuvC complex processes Holliday junction (HJ) DNA during genetic recombination and DNA repair, while the RuvA-RuvB complex plays an important role in the rescue of blocked DNA replication forks via replication fork reversal (RFR). RuvA specifically binds to HJ cruciform DNA, conferring on it an open structure. The RuvB hexamer acts as an ATP-dependent pump, pulling dsDNA into and through the RuvAB complex. HJ branch migration allows RuvC to scan DNA until it finds its consensus sequence, where it cleaves and resolves the cruciform DNA. The chain is Holliday junction branch migration complex subunit RuvA from Streptococcus thermophilus (strain CNRZ 1066).